The following is a 320-amino-acid chain: tRNA pseudouridine synthase B (320 aa).

Asp-49 functions as the Nucleophile in the catalytic mechanism.

It belongs to the pseudouridine synthase TruB family. Type 1 subfamily.

It carries out the reaction uridine(55) in tRNA = pseudouridine(55) in tRNA. Functionally, responsible for synthesis of pseudouridine from uracil-55 in the psi GC loop of transfer RNAs. The protein is tRNA pseudouridine synthase B of Bartonella tribocorum (strain CIP 105476 / IBS 506).